An 81-amino-acid chain; its full sequence is Photosystem I iron-sulfur center (81 aa).

2 4Fe-4S ferredoxin-type domains span residues 2 to 31 (SHTV…MVPW) and 39 to 68 (IASS…IRVY). Positions 11, 14, 17, 21, 48, 51, 54, and 58 each coordinate [4Fe-4S] cluster.

The cyanobacterial PSI reaction center is composed of one copy each of PsaA,B,C,D,E,F,I,J,K,L,M and X, and forms trimeric complexes. Requires [4Fe-4S] cluster as cofactor.

It is found in the cellular thylakoid membrane. It carries out the reaction reduced [plastocyanin] + hnu + oxidized [2Fe-2S]-[ferredoxin] = oxidized [plastocyanin] + reduced [2Fe-2S]-[ferredoxin]. Apoprotein for the two 4Fe-4S centers FA and FB of photosystem I (PSI); essential for photochemical activity. FB is the terminal electron acceptor of PSI, donating electrons to ferredoxin. The C-terminus interacts with PsaA/B/D and helps assemble the protein into the PSI complex. Required for binding of PsaD and PsaE to PSI. PSI is a plastocyanin/cytochrome c6-ferredoxin oxidoreductase, converting photonic excitation into a charge separation, which transfers an electron from the donor P700 chlorophyll pair to the spectroscopically characterized acceptors A0, A1, FX, FA and FB in turn. The polypeptide is Photosystem I iron-sulfur center (Microchaete diplosiphon (Fremyella diplosiphon)).